Consider the following 189-residue polypeptide: MNIIMGILDQAVSAEEGYFAGGASRKSLMEEMRRIRSKYKATVFGDSGREGMKFKMALLFVLKRVKQKIILEDRLMEVIDSEVAYIIGCVKSITSEPIRVGTVEAVRPIQHEAEHKCAKPRTRANFPMDTSQLLRSWLKENMDNPYPSDAEKAYLCQKTGLGPAQINNWFINARRRILPFMKGKCSNFK.

Residues Lys119–Met181 constitute a DNA-binding region (homeobox; TALE-type).

It belongs to the TALE/KNOX homeobox family.

It localises to the nucleus. This is Homeobox protein HD-2 (HD-2) from Encephalitozoon cuniculi (strain GB-M1) (Microsporidian parasite).